The chain runs to 1682 residues: MDDDNLDELVAHSPGPDGPPRVGSSELASDAEESSNGQSGDSEDDTGSEQDDDTDGEETEGLSEEEDPEDRSGSEDSEDGVEMATAAIETQGKLEASSVPNSDDDAESCPICLNAFRDQAVGTPETCAHYFCLDCIIEWSRNANSCPVDRTVFKCICIRAQFNGKILKKIPVENTKACEAEEEDPTFCEVCGRSDREDRLLLCDGCDAGYHMECLDPPLQEVPVDEWFCPECTVPGVDPTHDAAPVSDEEVSLLLADVVPTTSRLRPRVGRTRAIARTRQSERVRATVNRNRISSARRVQHVPRYLMSSLLDETIEAVATGLSTAVYQRPLTPRVPAKRKRKAGRRKKVLGRKKTRSRSSVKSKSGSTRAKKRQHRVRKTKGRKLKNEVTARSRIARTLGLRRPVRGTSMPSVYKPVDPSLGLMRADIGAASLSLFGDPYELDPFDSNEEQSADPPSPLSAKRRVLSRSALQSHQPVARPVAMGLSRRQLPAVAPEPSVEEAPVPDLLGSILSGQSLLMMSSADVVIHRDGSLSAKRAAPVSLQRNSVTQSREESRLRDNPQPGALPSESASGGFVGDRQPNSGLSCGNRTALCCLPARIAQTPVRSDPSLTPRSGLSRTLSDENRPSRTHSSSPQLNGSNVRVSSASTKIVTHSSFPSKNTASGLPQRTGPRRPDFSKLPRIPKIHRDGNKSTQDQAPASGHIVELPSTCISRLTGREGPGQPGRGRVDSEPSSRGPQETGSHTSGSRPPAPSSHGSLAHLGPSRGKGIGSSFESFRINIPGNTAHCSQLSSPGFCNTFRPVDSKVQRKETPFPLFSIKKPKQLKSEIYDPFDPTGSDSSPPSSSPESLGPGLLPSEITRTISINSPKAPAFQTVRCVTSYRVESIFGTEMEPEPQPPSEPVSGMLELLSKGSAEGTSDLEQEGLGEIEPTEIRGSTARTQRPPPPDPWDDEDEVSCTPFFGSEERTVTCVTVEEPGVLPSPDAPQITTHRIVEFRASSRSRSTSSSRSRKKTKKKKKKVAREHQRTRSSTRSGSRDRTSRSVSPVAEEHTRRHRAKTKSRRSSSDRASSQDRAKRRKDRDDRDREHRRGSWGHGRCRRKSRSRSGSPGSSSCERHESKRRKRRHSGSRSRGSSLERDRRHKHRERSRERMDKQESVTRSRERRRWRSRSPSLEHRPRRPPSREKRAHSPEKKGPVREVSPAPATQGESRQDGDHSAEPPVSEVSVLPEVVSVLPEVVVADLNPPEVPPVLAEPVAHVPEDLDYGESVEAGHVFEDFSNEAIFIQLDDMSSPPSPESTDSSPERDFPPNPILPPASLPQDSTLPTIQREVLPIHSEDISKPVPQALAPSDQSLLKQDTVEITTTTPSTPAVVPMTKDSPVLSARGWEAVRPRDAVAQAPLLRSRTLVKRVTWNLQEAEHSTPAALDRDPRTPLQRPQRPQEGDWDAEDRALIGFQQAPFSELPPPIHVLQESGLPDADPSQPPGAPRAEGLPAAGTLHSAGGILAQVYSPNMPPPLAQPSSILPYALVSQPSVQLILQGTLPLAGCGTAQSLAPVPTMPATVSELAVPTTNNSEERTATPKTAAEKTKKEEYMKKLHMQERAVEEVKLAIKPFYQKREVTKEEYKDILRKAVQKICHSKSGEINPVKVANLVKAYVDKYRHMRRHKKTEGGEEPPTQGAET.

The interval 1–81 (MDDDNLDELV…SGSEDSEDGV (81 aa)) is disordered. Over residues 41 to 81 (DSEDDTGSEQDDDTDGEETEGLSEEEDPEDRSGSEDSEDGV) the composition is skewed to acidic residues. The segment at 109–150 (CPICLNAFRDQAVGTPETCAHYFCLDCIIEWSRNANSCPVDR) adopts an RING-type; degenerate zinc-finger fold. The PHD-type zinc finger occupies 185–235 (PTFCEVCGRSDREDRLLLCDGCDAGYHMECLDPPLQEVPVDEWFCPECTVP). Disordered stretches follow at residues 330-412 (PLTP…SMPS), 444-483 (PFDS…PVAM), 532-582 (SLSA…RQPN), 605-774 (VRSD…GSSF), and 825-856 (LKSE…GLLP). The residue at position 332 (Thr332) is a Phosphothreonine. Composition is skewed to basic residues over residues 336 to 361 (PAKR…RSSV) and 369 to 384 (RAKK…KGRK). Phosphoserine is present on residues Ser447 and Ser457. Composition is skewed to polar residues over residues 609 to 620 (PSLTPRSGLSRT), 630 to 667 (THSS…SGLP), and 734 to 748 (SSRG…TSGS). The span at 832 to 856 (PFDPTGSDSSPPSSSPESLGPGLLP) shows a compositional bias: low complexity. Ser845, Ser846, Ser864, Ser867, Ser919, Ser982, and Ser1000 each carry phosphoserine. Disordered regions lie at residues 911 to 1225 (SKGS…VSEV) and 1288 to 1322 (DDMS…PQDS). Over residues 919–931 (SDLEQEGLGEIEP) the composition is skewed to acidic residues. The span at 999-1008 (SSRSRSTSSS) shows a compositional bias: low complexity. Basic residues-rich tracts occupy residues 1009–1030 (RSRK…RTRS) and 1053–1063 (RRHRAKTKSRR). Basic and acidic residues predominate over residues 1064-1090 (SSSDRASSQDRAKRRKDRDDRDREHRR). 2 stretches are compositionally biased toward basic residues: residues 1091-1104 (GSWG…KSRS) and 1119-1129 (SKRRKRRHSGS). Ser1135 carries the phosphoserine modification. Composition is skewed to basic and acidic residues over residues 1147–1161 (RSRE…VTRS) and 1182–1197 (PSRE…KGPV). A Phosphoserine modification is found at Ser1201. A compositionally biased stretch (low complexity) spans 1288–1301 (DDMSSPPSPESTDS). The span at 1308–1317 (PPNPILPPAS) shows a compositional bias: pro residues. Phosphoserine occurs at positions 1368 and 1379. Residue Thr1412 is modified to Phosphothreonine. 4 disordered regions span residues 1419–1445 (EHST…EGDW), 1463–1496 (LPPP…PAAG), 1567–1588 (AVPT…AEKT), and 1663–1682 (MRRH…GAET). Residues 1574-1588 (SEERTATPKTAAEKT) are compositionally biased toward basic and acidic residues. The stretch at 1585–1612 (AEKTKKEEYMKKLHMQERAVEEVKLAIK) forms a coiled coil.

In terms of assembly, interacts with POLR2A (via the C-terminal domain).

The polypeptide is PHD and RING finger domain-containing protein 1 (Mus musculus (Mouse)).